Consider the following 401-residue polypeptide: Argininosuccinate synthase (401 aa).

Residues 11–19 (AYSGGLDTS) and alanine 38 each bind ATP. L-citrulline is bound by residues tyrosine 89 and serine 94. Residue glycine 119 participates in ATP binding. Residues threonine 121, asparagine 125, and aspartate 126 each contribute to the L-aspartate site. Asparagine 125 serves as a coordination point for L-citrulline. Residues arginine 129, serine 180, serine 189, glutamate 265, and tyrosine 277 each coordinate L-citrulline.

It belongs to the argininosuccinate synthase family. Type 1 subfamily. Homotetramer.

The protein localises to the cytoplasm. It carries out the reaction L-citrulline + L-aspartate + ATP = 2-(N(omega)-L-arginino)succinate + AMP + diphosphate + H(+). It participates in amino-acid biosynthesis; L-arginine biosynthesis; L-arginine from L-ornithine and carbamoyl phosphate: step 2/3. The sequence is that of Argininosuccinate synthase from Syntrophus aciditrophicus (strain SB).